The sequence spans 271 residues: Large ribosomal subunit protein uL18 (271 aa).

Residues 245–264 show a composition bias toward basic and acidic residues; the sequence is IRENPCPPKKERTKPADAKR. Positions 245–271 are disordered; that stretch reads IRENPCPPKKERTKPADAKRWSPQAHL.

It belongs to the universal ribosomal protein uL18 family. As to quaternary structure, component of the large ribosomal subunit (LSU).

It localises to the cytoplasm. The protein resides in the nucleus. Its function is as follows. Component of the ribosome, a large ribonucleoprotein complex responsible for the synthesis of proteins in the cell. The small ribosomal subunit (SSU) binds messenger RNAs (mRNAs) and translates the encoded message by selecting cognate aminoacyl-transfer RNA (tRNA) molecules. The large subunit (LSU) contains the ribosomal catalytic site termed the peptidyl transferase center (PTC), which catalyzes the formation of peptide bonds, thereby polymerizing the amino acids delivered by tRNAs into a polypeptide chain. The nascent polypeptides leave the ribosome through a tunnel in the LSU and interact with protein factors that function in enzymatic processing, targeting, and the membrane insertion of nascent chains at the exit of the ribosomal tunnel. The protein is Large ribosomal subunit protein uL18 (RPL5) of Dunaliella salina (Green alga).